The sequence spans 31 residues: Cytochrome b6-f complex subunit 6 (31 aa).

A helical transmembrane segment spans residues 4-24 (VVSYLGILAAFALVTIGIFLV).

The protein belongs to the PetL family. In terms of assembly, the 4 large subunits of the cytochrome b6-f complex are cytochrome b6, subunit IV (17 kDa polypeptide, PetD), cytochrome f and the Rieske protein, while the 4 small subunits are PetG, PetL, PetM and PetN. The complex functions as a dimer.

Its subcellular location is the plastid. It is found in the chloroplast thylakoid membrane. In terms of biological role, component of the cytochrome b6-f complex, which mediates electron transfer between photosystem II (PSII) and photosystem I (PSI), cyclic electron flow around PSI, and state transitions. PetL is important for photoautotrophic growth as well as for electron transfer efficiency and stability of the cytochrome b6-f complex. This chain is Cytochrome b6-f complex subunit 6, found in Mesostigma viride (Green alga).